A 366-amino-acid polypeptide reads, in one-letter code: tRNA/tmRNA (uracil-C(5))-methyltransferase (366 aa).

5 residues coordinate S-adenosyl-L-methionine: Q190, Y218, N223, E239, and D299. C324 (nucleophile) is an active-site residue. E358 serves as the catalytic Proton acceptor.

It belongs to the class I-like SAM-binding methyltransferase superfamily. RNA M5U methyltransferase family. TrmA subfamily.

The enzyme catalyses uridine(54) in tRNA + S-adenosyl-L-methionine = 5-methyluridine(54) in tRNA + S-adenosyl-L-homocysteine + H(+). It catalyses the reaction uridine(341) in tmRNA + S-adenosyl-L-methionine = 5-methyluridine(341) in tmRNA + S-adenosyl-L-homocysteine + H(+). Functionally, dual-specificity methyltransferase that catalyzes the formation of 5-methyluridine at position 54 (m5U54) in all tRNAs, and that of position 341 (m5U341) in tmRNA (transfer-mRNA). The sequence is that of tRNA/tmRNA (uracil-C(5))-methyltransferase from Salmonella newport (strain SL254).